A 201-amino-acid polypeptide reads, in one-letter code: Molybdenum cofactor guanylyltransferase (201 aa).

Residues 14–16 (LAG), lysine 31, and aspartate 104 each bind GTP. Mg(2+) is bound at residue aspartate 104.

This sequence belongs to the MobA family. In terms of assembly, monomer. The cofactor is Mg(2+).

The protein resides in the cytoplasm. The catalysed reaction is Mo-molybdopterin + GTP + H(+) = Mo-molybdopterin guanine dinucleotide + diphosphate. Its function is as follows. Transfers a GMP moiety from GTP to Mo-molybdopterin (Mo-MPT) cofactor (Moco or molybdenum cofactor) to form Mo-molybdopterin guanine dinucleotide (Mo-MGD) cofactor. This chain is Molybdenum cofactor guanylyltransferase, found in Helicobacter pylori (strain ATCC 700392 / 26695) (Campylobacter pylori).